The chain runs to 332 residues: 1-acyl-sn-glycerol-3-phosphate acyltransferase CHLREDRAFT_174358 (332 aa).

A helical transmembrane segment spans residues 96-116; it reads FLLSLPLFVTMMVMAPLVLAF. The HXXXXD motif signature appears at 163–168; sequence HQSFLD. The helical transmembrane segment at 185-205 threads the bilayer; it reads TSNFLIPIIGWSMFLTGHVMI. The short motif at 235 to 238 is the EGTR motif element; the sequence is EGTR.

Belongs to the 1-acyl-sn-glycerol-3-phosphate acyltransferase family.

It localises to the membrane. It carries out the reaction a 1-acyl-sn-glycero-3-phosphate + an acyl-CoA = a 1,2-diacyl-sn-glycero-3-phosphate + CoA. Its pathway is phospholipid metabolism; CDP-diacylglycerol biosynthesis; CDP-diacylglycerol from sn-glycerol 3-phosphate: step 2/3. Functionally, converts lysophosphatidic acid (LPA) into phosphatidic acid by incorporating an acyl moiety at the sn-2 position of the glycerol backbone. This is 1-acyl-sn-glycerol-3-phosphate acyltransferase CHLREDRAFT_174358 from Chlamydomonas reinhardtii (Chlamydomonas smithii).